The sequence spans 855 residues: Sucrose synthase 5 (855 aa).

Residues 279-758 (SIFNIVIFSI…GLQRICECYT (480 aa)) form a GT-B glycosyltransferase region.

This sequence belongs to the glycosyltransferase 1 family. Plant sucrose synthase subfamily. Predominantly expressed in roots, flowers and immature seeds.

Its subcellular location is the cytoplasm. It localises to the membrane. The enzyme catalyses an NDP-alpha-D-glucose + D-fructose = a ribonucleoside 5'-diphosphate + sucrose + H(+). In terms of biological role, sucrose-cleaving enzyme that provides UDP-glucose and fructose for various metabolic pathways. This is Sucrose synthase 5 (SUS5) from Oryza sativa subsp. japonica (Rice).